The sequence spans 422 residues: 5-methylthioadenosine/S-adenosylhomocysteine deaminase 1 (422 aa).

Residues His56 and His58 each coordinate Zn(2+). Substrate-binding residues include Glu85 and His174. His201 lines the Zn(2+) pocket. Substrate-binding residues include Glu204 and Asp290. Residue Asp290 participates in Zn(2+) binding.

The protein belongs to the metallo-dependent hydrolases superfamily. MTA/SAH deaminase family. It depends on Zn(2+) as a cofactor.

The catalysed reaction is S-adenosyl-L-homocysteine + H2O + H(+) = S-inosyl-L-homocysteine + NH4(+). It carries out the reaction S-methyl-5'-thioadenosine + H2O + H(+) = S-methyl-5'-thioinosine + NH4(+). Catalyzes the deamination of 5-methylthioadenosine and S-adenosyl-L-homocysteine into 5-methylthioinosine and S-inosyl-L-homocysteine, respectively. Is also able to deaminate adenosine. This Archaeoglobus fulgidus (strain ATCC 49558 / DSM 4304 / JCM 9628 / NBRC 100126 / VC-16) protein is 5-methylthioadenosine/S-adenosylhomocysteine deaminase 1.